The sequence spans 406 residues: Succinylornithine transaminase (406 aa).

N6-(pyridoxal phosphate)lysine is present on K252.

It belongs to the class-III pyridoxal-phosphate-dependent aminotransferase family. AstC subfamily. The cofactor is pyridoxal 5'-phosphate.

It carries out the reaction N(2)-succinyl-L-ornithine + 2-oxoglutarate = N-succinyl-L-glutamate 5-semialdehyde + L-glutamate. It functions in the pathway amino-acid degradation; L-arginine degradation via AST pathway; L-glutamate and succinate from L-arginine: step 3/5. Functionally, catalyzes the transamination of N(2)-succinylornithine and alpha-ketoglutarate into N(2)-succinylglutamate semialdehyde and glutamate. Can also act as an acetylornithine aminotransferase. This chain is Succinylornithine transaminase, found in Escherichia coli O139:H28 (strain E24377A / ETEC).